Here is a 497-residue protein sequence, read N- to C-terminus: Probable zinc metalloprotease TRV_03476 (497 aa).

A signal peptide spans methionine 1–alanine 24. N-linked (GlcNAc...) asparagine glycosylation is found at asparagine 100 and asparagine 121. Zn(2+) contacts are provided by histidine 171, aspartate 191, and glutamate 227. An N-linked (GlcNAc...) asparagine glycan is attached at asparagine 242. Aspartate 254 lines the Zn(2+) pocket. In terms of domain architecture, Fibronectin type-III spans methionine 411–proline 497. Residue asparagine 424 is glycosylated (N-linked (GlcNAc...) asparagine).

Belongs to the peptidase M28 family. M28B subfamily. The cofactor is Zn(2+).

The protein resides in the secreted. The protein is Probable zinc metalloprotease TRV_03476 of Trichophyton verrucosum (strain HKI 0517).